Here is a 457-residue protein sequence, read N- to C-terminus: tRNA-2-methylthio-N(6)-dimethylallyladenosine synthase (457 aa).

Positions 3–120 (KKVYVKTFGC…LPQMIDARRA (118 aa)) constitute an MTTase N-terminal domain. Cys-12, Cys-49, Cys-83, Cys-157, Cys-161, and Cys-164 together coordinate [4Fe-4S] cluster. Residues 143–377 (RVEGPSAFVS…QATIEENVAR (235 aa)) enclose the Radical SAM core domain. Residues 380 to 447 (QSMVGKVERI…PHSLRGELLL (68 aa)) enclose the TRAM domain.

The protein belongs to the methylthiotransferase family. MiaB subfamily. Monomer. [4Fe-4S] cluster serves as cofactor.

The protein localises to the cytoplasm. It catalyses the reaction N(6)-dimethylallyladenosine(37) in tRNA + (sulfur carrier)-SH + AH2 + 2 S-adenosyl-L-methionine = 2-methylsulfanyl-N(6)-dimethylallyladenosine(37) in tRNA + (sulfur carrier)-H + 5'-deoxyadenosine + L-methionine + A + S-adenosyl-L-homocysteine + 2 H(+). Functionally, catalyzes the methylthiolation of N6-(dimethylallyl)adenosine (i(6)A), leading to the formation of 2-methylthio-N6-(dimethylallyl)adenosine (ms(2)i(6)A) at position 37 in tRNAs that read codons beginning with uridine. This chain is tRNA-2-methylthio-N(6)-dimethylallyladenosine synthase, found in Burkholderia vietnamiensis (strain G4 / LMG 22486) (Burkholderia cepacia (strain R1808)).